Here is a 468-residue protein sequence, read N- to C-terminus: Envelope glycoprotein C (468 aa).

Residues 1-30 (MWLPNLVRFVAVAYLICAGAILTYASGASA) form the signal peptide. Residues 31 to 50 (SSSQSTPATPTHTTPNLTTA) are compositionally biased toward low complexity. The interval 31-73 (SSSQSTPATPTHTTPNLTTAHGAGSDNTTNANGTESTHSHETT) is disordered. Over 31 to 431 (SSSQSTPATP…IVEDRPVLTS (401 aa)) the chain is Virion surface. Asn-46, Asn-57, Asn-62, Asn-92, Asn-100, Asn-131, Asn-203, Asn-208, and Asn-269 each carry an N-linked (GlcNAc...) asparagine; by host glycan. An intrachain disulfide couples Cys-76 to Cys-93. Ig-like domains lie at 220-311 (PLLD…DEVS) and 321-416 (PSVF…DTVV). 3 disulfide bridges follow: Cys-239–Cys-301, Cys-340–Cys-399, and Cys-344–Cys-373. The chain crosses the membrane as a helical span at residues 432–451 (IIAVTCGAAALALVVLITAV). Residues 452 to 468 (CFYCSKPSQAPYKKSDF) are Cytoplasmic-facing.

This sequence belongs to the herpesviridae glycoprotein C family. Interacts with host complement component C3; this interaction inhibits host immune response by disregulating complement cascade.

It localises to the virion membrane. Essential for the initial attachment to heparan sulfate moieties of the host cell surface proteoglycans. Also plays a role in host immune evasion by inhibiting the host complement cascade activation. In Equus caballus (Horse), this protein is Envelope glycoprotein C (gC).